The chain runs to 524 residues: Chitinase D (524 aa).

A signal peptide spans 1-30 (MNQAVRFRPVITFALAFILIITWFAPRADA). In terms of domain architecture, Fibronectin type-III spans 95–180 (VPAGLTSSLV…TSLSVTTSTG (86 aa)). In terms of domain architecture, GH18 spans 190-514 (KWLIGYWHNF…NAHRPFLNGL (325 aa)). The Proton donor role is filled by Glu-303.

It belongs to the glycosyl hydrolase 18 family. Chitinase class II subfamily.

The enzyme catalyses Random endo-hydrolysis of N-acetyl-beta-D-glucosaminide (1-&gt;4)-beta-linkages in chitin and chitodextrins.. This Niallia circulans (Bacillus circulans) protein is Chitinase D (chiD).